The sequence spans 400 residues: MRIFKSHPLLKLVNSYIIDSPQPTNLSYLWNFGSLLALCLGIQIVTGVTLAMHYTPNVLDAFDSIEHIMRDVNNGWLIRYLHSNTASAFFFLVYLHIGRGIYYGSYQGPRTLTWSIGTIIFIAMVATAFLGYVLPYGQMSLWGATVITNLLSAIPWIGQDLVEFIWGGFSVNNATLNRFFSLHFLLPFILAALVLMHLIALHDTVGSSNPLGISGNYDRLPFAPYYLFKDLVTIFLFMLILSIFVFFMPNALGDCENYVMANPMQTPPAIVPEWYLLPFYAILRSIPDKAVGVVLMFGAILIILALPYLDKSILRGIQYRPLSKVAFYIFVANFLVLMQLGAKHVEDPFIVFGQLSTILYFSYFIIIIPLLSLIENELLDIATNYSSNKTLKNRKSLLSE.

Transmembrane regions (helical) follow at residues 32–52 (FGSLLALCLGIQIVTGVTLAM), 76–98 (WLIRYLHSNTASAFFFLVYLHIG), 113–133 (TWSIGTIIFIAMVATAFLGYV), and 179–199 (FFSLHFLLPFILAALVLMHLI). Positions 82 and 96 each coordinate heme b. Heme b contacts are provided by H183 and H197. H202 provides a ligand contact to a ubiquinone. The next 4 membrane-spanning stretches (helical) occupy residues 226–246 (YLFKDLVTIFLFMLILSIFVF), 290–310 (AVGVVLMFGAILIILALPYLD), 322–342 (LSKVAFYIFVANFLVLMQLGA), and 349–369 (FIVFGQLSTILYFSYFIIIIP).

This sequence belongs to the cytochrome b family. In terms of assembly, fungal cytochrome b-c1 complex contains 10 subunits; 3 respiratory subunits, 2 core proteins and 5 low-molecular weight proteins. Cytochrome b-c1 complex is a homodimer. Heme b serves as cofactor.

Its subcellular location is the mitochondrion inner membrane. In terms of biological role, component of the ubiquinol-cytochrome c reductase complex (complex III or cytochrome b-c1 complex) that is part of the mitochondrial respiratory chain. The b-c1 complex mediates electron transfer from ubiquinol to cytochrome c. Contributes to the generation of a proton gradient across the mitochondrial membrane that is then used for ATP synthesis. In Epidermophyton floccosum, this protein is Cytochrome b (cob).